Consider the following 245-residue polypeptide: Orotidine 5'-phosphate decarboxylase (245 aa).

Substrate is bound by residues Asp-22, Lys-44, 71–80 (DLKFHDIPNT), Thr-131, Arg-192, Gln-201, Gly-221, and Arg-222. Residue Lys-73 is the Proton donor of the active site.

Belongs to the OMP decarboxylase family. Type 1 subfamily. In terms of assembly, homodimer.

The enzyme catalyses orotidine 5'-phosphate + H(+) = UMP + CO2. The protein operates within pyrimidine metabolism; UMP biosynthesis via de novo pathway; UMP from orotate: step 2/2. Functionally, catalyzes the decarboxylation of orotidine 5'-monophosphate (OMP) to uridine 5'-monophosphate (UMP). The polypeptide is Orotidine 5'-phosphate decarboxylase (Salmonella gallinarum (strain 287/91 / NCTC 13346)).